We begin with the raw amino-acid sequence, 293 residues long: Ribonuclease HIII (293 aa).

In terms of domain architecture, RNase H type-2 spans 78–293; that stretch reads LPLIGTDEVG…TEKAKKRLER (216 aa). Residues Asp84, Glu85, and Asp187 each coordinate a divalent metal cation.

Belongs to the RNase HII family. RnhC subfamily. Requires Mn(2+) as cofactor. Mg(2+) is required as a cofactor.

The protein resides in the cytoplasm. The catalysed reaction is Endonucleolytic cleavage to 5'-phosphomonoester.. Endonuclease that specifically degrades the RNA of RNA-DNA hybrids. This Streptococcus pneumoniae (strain JJA) protein is Ribonuclease HIII.